A 459-amino-acid polypeptide reads, in one-letter code: Cyclic GMP-AMP synthase-like receptor 2 (459 aa).

ATP is bound by residues Ser-68 and 79–81 (EFD). Glu-79, Asp-81, and Asp-199 together coordinate Mg(2+). Residues Asp-199 and 248-255 (RSSFYAVE) each bind GTP. An ATP-binding site is contributed by 252-255 (YAVE). Position 263 (His-263) interacts with Zn(2+). Residues Lys-274 and 288 to 292 (SYYIK) contribute to the ATP site.

It belongs to the mab-21 family. It depends on Mg(2+) as a cofactor. Requires Mn(2+) as cofactor.

The catalysed reaction is GTP + ATP = 3',2'-cGAMP + 2 diphosphate. It carries out the reaction GTP + ATP = 2',3'-cGAMP + 2 diphosphate. The enzyme catalyses GTP + ATP = pppGp(2'-5')A + diphosphate. It catalyses the reaction pppA(2'-5')pG = 3',2'-cGAMP + diphosphate. The catalysed reaction is pppGp(2'-5')A = 2',3'-cGAMP + diphosphate. Its activity is regulated as follows. The enzyme activity is specifically activated by some nucleic acid. Functionally, nucleotidyltransferase that catalyzes the formation of cyclic GMP-AMP from ATP and GTP and plays a key role in antiviral innate immunity. Directly binds some unknown nucleic acid, activating the nucleotidyltransferase activity, leading to synthesis of both 3',2'-cGAMP and 2',3'-cGAMP second messengers. 3',2'-cGAMP and 2',3'-cGAMP bind to and activate Sting, thereby triggering the antiviral immune response via activation of the NF-kappa-B transcription factor Rel (Relish). In Drosophila melanogaster (Fruit fly), this protein is Cyclic GMP-AMP synthase-like receptor 2.